The following is a 485-amino-acid chain: Glutamyl-tRNA(Gln) amidotransferase subunit A (485 aa).

Active-site charge relay system residues include K79 and S154. S178 serves as the catalytic Acyl-ester intermediate.

Belongs to the amidase family. GatA subfamily. As to quaternary structure, heterotrimer of A, B and C subunits.

It catalyses the reaction L-glutamyl-tRNA(Gln) + L-glutamine + ATP + H2O = L-glutaminyl-tRNA(Gln) + L-glutamate + ADP + phosphate + H(+). In terms of biological role, allows the formation of correctly charged Gln-tRNA(Gln) through the transamidation of misacylated Glu-tRNA(Gln) in organisms which lack glutaminyl-tRNA synthetase. The reaction takes place in the presence of glutamine and ATP through an activated gamma-phospho-Glu-tRNA(Gln). The sequence is that of Glutamyl-tRNA(Gln) amidotransferase subunit A from Clostridium botulinum (strain Eklund 17B / Type B).